The following is a 317-amino-acid chain: ADP-L-glycero-D-manno-heptose-6-epimerase (317 aa).

NADP(+)-binding positions include 10-11 (FI), 31-32 (DD), Gln38, Lys53, 75-79 (QGACS), and Asn92. The active-site Proton acceptor is Tyr139. Position 143 (Lys143) interacts with NADP(+). Position 166 (Asn166) interacts with substrate. 2 residues coordinate NADP(+): Val167 and Lys175. Lys175 (proton acceptor) is an active-site residue. Substrate is bound by residues Gly177, His184, 198-201 (FEGV), Arg211, and Tyr275.

It belongs to the NAD(P)-dependent epimerase/dehydratase family. HldD subfamily. In terms of assembly, homopentamer. Requires NADP(+) as cofactor.

It catalyses the reaction ADP-D-glycero-beta-D-manno-heptose = ADP-L-glycero-beta-D-manno-heptose. The protein operates within nucleotide-sugar biosynthesis; ADP-L-glycero-beta-D-manno-heptose biosynthesis; ADP-L-glycero-beta-D-manno-heptose from D-glycero-beta-D-manno-heptose 7-phosphate: step 4/4. In terms of biological role, catalyzes the interconversion between ADP-D-glycero-beta-D-manno-heptose and ADP-L-glycero-beta-D-manno-heptose via an epimerization at carbon 6 of the heptose. In Shewanella frigidimarina (strain NCIMB 400), this protein is ADP-L-glycero-D-manno-heptose-6-epimerase.